The sequence spans 172 residues: Myosin regulatory light chain 2, smooth muscle minor isoform (172 aa).

Ser-2 is modified (N-acetylserine). Residue Thr-19 is modified to Phosphothreonine; by MLCK. Phosphoserine; by MLCK is present on Ser-20. 3 EF-hand domains span residues 29-64 (SQIQ…LGKN), 98-133 (DPED…MGDR), and 134-169 (FTDE…GAKD). Ca(2+) is bound by residues Asp-42, Asn-44, Asp-46, and Asp-53.

As to quaternary structure, myosin is a hexamer of 2 heavy chains and 4 light chains. Post-translationally, phosphorylation increases the actin-activated myosin ATPase activity and thereby regulates the contractile activity.

Its function is as follows. Myosin regulatory subunit that plays an important role in regulation of both smooth muscle and nonmuscle cell contractile activity. Implicated in cytokinesis, receptor capping, and cell locomotion. The sequence is that of Myosin regulatory light chain 2, smooth muscle minor isoform from Gallus gallus (Chicken).